A 78-amino-acid polypeptide reads, in one-letter code: Acyl carrier protein AcpP (78 aa).

In terms of domain architecture, Carrier spans 2-77 (SDTAERVKKI…DAVKYIDKAS (76 aa)). O-(pantetheine 4'-phosphoryl)serine is present on Ser-37.

This sequence belongs to the acyl carrier protein (ACP) family. In terms of processing, 4'-phosphopantetheine is transferred from CoA to a specific serine of apo-ACP by AcpS. This modification is essential for activity because fatty acids are bound in thioester linkage to the sulfhydryl of the prosthetic group.

It localises to the cytoplasm. It participates in lipid metabolism; fatty acid biosynthesis. Functionally, carrier of the growing fatty acid chain in fatty acid biosynthesis. The polypeptide is Acyl carrier protein AcpP (Mesorhizobium japonicum (strain LMG 29417 / CECT 9101 / MAFF 303099) (Mesorhizobium loti (strain MAFF 303099))).